Here is a 92-residue protein sequence, read N- to C-terminus: Small ribosomal subunit protein uS19c (92 aa).

It belongs to the universal ribosomal protein uS19 family.

It is found in the plastid. It localises to the chloroplast. Its function is as follows. Protein S19 forms a complex with S13 that binds strongly to the 16S ribosomal RNA. The chain is Small ribosomal subunit protein uS19c from Illicium oligandrum (Star anise).